Reading from the N-terminus, the 197-residue chain is Small ribosomal subunit protein uS4 (197 aa).

In terms of domain architecture, S4 RNA-binding spans 88–150 (SRLDNLVYRM…AKSLEIILDN (63 aa)).

It belongs to the universal ribosomal protein uS4 family. As to quaternary structure, part of the 30S ribosomal subunit. Contacts protein S5. The interaction surface between S4 and S5 is involved in control of translational fidelity.

Its function is as follows. One of the primary rRNA binding proteins, it binds directly to 16S rRNA where it nucleates assembly of the body of the 30S subunit. Functionally, with S5 and S12 plays an important role in translational accuracy. The protein is Small ribosomal subunit protein uS4 of Azobacteroides pseudotrichonymphae genomovar. CFP2.